The chain runs to 298 residues: MSATTSEAPNSAVSREASTQSSSATTSQGYVLPEGKIMPNTVFVGGIDVRMDETEIRSFFARYGSVKEVKIITDRTGVSKGYGFVSFYNDVDVQKIVESQINFHGKKLKLGPAIRKQNLCTYHVQPRPLIFNPPPPPQFQSVWSSPNAETYMQPPTMMNPITQYVQAYPPYPSSPVQVITGYQLPVYNYQMPPQWPAGEQRSYVIPPAYTTVNYHCSEVDPGADILPNECSVHDAAPASGNGPQKKSVDRSIQTVVSCLFNPENRLRNSLVTQDDYFKDKRVHHFRRSRAVLKSDHLC.

A disordered region spans residues 1-27; the sequence is MSATTSEAPNSAVSREASTQSSSATTS. The span at 11-27 shows a compositional bias: low complexity; it reads SAVSREASTQSSSATTS. The RRM domain maps to 40–115; it reads NTVFVGGIDV…KKLKLGPAIR (76 aa). Residues 80–132 form a homodimerization region; that stretch reads KGYGFVSFYNDVDVQKIVESQINFHGKKLKLGPAIRKQNLCTYHVQPRPLIFN. The 24-residue stretch at 167-190 folds into the DAZ domain; it reads AYPPYPSSPVQVITGYQLPVYNYQ. Residue Tyr276 is modified to Phosphotyrosine.

The protein belongs to the RRM DAZ family. Homodimer and heterodimer. Forms a heterodimer with DAZ. Interacts with BOLL, DAZAP1 and DAZAP2. Interacts with PUM2. Multiple DAZL RRMs can bind to a single RNA containing multiple GUU triplets. In terms of tissue distribution, expressed predominantly in testis with lower levels in ovary. In testis, it is expressed in pachytene spermatocytes and at lower level in type-B spermatogonia, preleptotene and zygotene spermatocytes. In ovary, it is expressed in maturing follicles. In embryonic and prepuberal ovary, it is expressed in the oocyte and follicular cells.

It is found in the cytoplasm. In terms of biological role, RNA-binding protein, which is essential for gametogenesis in both males and females. Plays a central role during spermatogenesis. Acts by binding to the 3'-UTR of mRNA, specifically recognizing GUU triplets, and thereby regulating the translation of key transcripts. The sequence is that of Deleted in azoospermia-like (Dazl) from Mus musculus (Mouse).